A 353-amino-acid chain; its full sequence is ATP-dependent kinase YFH7 (353 aa).

31–39 contacts ATP; the sequence is GSPGSGKST.

It belongs to the YFH7 family.

Its function is as follows. ATP-dependent kinase that could be involved in endoplasmic reticulum membrane assembly. The protein is ATP-dependent kinase YFH7 (YFH7) of Saccharomyces cerevisiae (strain ATCC 204508 / S288c) (Baker's yeast).